The sequence spans 674 residues: DNA ligase (674 aa).

NAD(+)-binding positions include aspartate 35 to aspartate 39, serine 82 to leucine 83, and glutamate 116. The active-site N6-AMP-lysine intermediate is the lysine 118. The NAD(+) site is built by arginine 139, glutamate 174, lysine 282, and lysine 306. Zn(2+)-binding residues include cysteine 400, cysteine 403, cysteine 418, and cysteine 424. The BRCT domain maps to serine 593–valine 674.

This sequence belongs to the NAD-dependent DNA ligase family. LigA subfamily. Requires Mg(2+) as cofactor. It depends on Mn(2+) as a cofactor.

It carries out the reaction NAD(+) + (deoxyribonucleotide)n-3'-hydroxyl + 5'-phospho-(deoxyribonucleotide)m = (deoxyribonucleotide)n+m + AMP + beta-nicotinamide D-nucleotide.. Functionally, DNA ligase that catalyzes the formation of phosphodiester linkages between 5'-phosphoryl and 3'-hydroxyl groups in double-stranded DNA using NAD as a coenzyme and as the energy source for the reaction. It is essential for DNA replication and repair of damaged DNA. The polypeptide is DNA ligase (Ehrlichia ruminantium (strain Welgevonden)).